A 708-amino-acid polypeptide reads, in one-letter code: Elongation factor G (708 aa).

Residues 8–290 form the tr-type G domain; that stretch reads KRYRNIGISA…AVIQYLPAPM (283 aa). Residues 17-24, 88-92, and 142-145 contribute to the GTP site; these read AHIDAGKT, DTPGH, and NKMD.

The protein belongs to the TRAFAC class translation factor GTPase superfamily. Classic translation factor GTPase family. EF-G/EF-2 subfamily.

The protein resides in the cytoplasm. Its function is as follows. Catalyzes the GTP-dependent ribosomal translocation step during translation elongation. During this step, the ribosome changes from the pre-translocational (PRE) to the post-translocational (POST) state as the newly formed A-site-bound peptidyl-tRNA and P-site-bound deacylated tRNA move to the P and E sites, respectively. Catalyzes the coordinated movement of the two tRNA molecules, the mRNA and conformational changes in the ribosome. This chain is Elongation factor G, found in Psychrobacter cryohalolentis (strain ATCC BAA-1226 / DSM 17306 / VKM B-2378 / K5).